The chain runs to 312 residues: Zinc-finger homeodomain protein 4 (312 aa).

The segment at 20–74 (GGGGSHGHMIHHHDHHAANSAPPTHNNNNTTQPPPMPLHGNGHGNNYDHHHHQDP) is disordered. A compositionally biased stretch (low complexity) spans 37 to 50 (ANSAPPTHNNNNTT). Residues 90–139 (YKECLKNHAAAMGGNATDGCGEFMPSGEDGSIEALTCSACNCHRNFHRKE) form a ZF-HD dimerization-type; degenerate zinc finger. The segment at residues 218–281 (KKRFRTKFTP…NNKIHFSKKN (64 aa)) is a DNA-binding region (homeobox).

In terms of assembly, homo- and heterodimer with other ZFHD proteins. Interacts with ZHD1, ZHD2, ZHD5, ZHD7, ZHD8, ZHD10 and ZHD11. As to expression, mostly expressed in flowers and inflorescence.

The protein localises to the nucleus. In terms of biological role, putative transcription factor. Probably involved in the regulation of floral induction. The sequence is that of Zinc-finger homeodomain protein 4 (ZHD4) from Arabidopsis thaliana (Mouse-ear cress).